Here is a 499-residue protein sequence, read N- to C-terminus: Long chain base biosynthesis protein 2b (499 aa).

A helical membrane pass occupies residues 5-25; that stretch reads VPYVTAATTLFSFGLIFGFGH. K322 carries the N6-(pyridoxal phosphate)lysine modification.

Belongs to the class-II pyridoxal-phosphate-dependent aminotransferase family. Heterodimer with LCB1. Component of the serine palmitoyltransferase (SPT) complex, composed of LCB1 and LCB2. Requires pyridoxal 5'-phosphate as cofactor.

The protein localises to the endoplasmic reticulum membrane. The catalysed reaction is L-serine + hexadecanoyl-CoA + H(+) = 3-oxosphinganine + CO2 + CoA. It functions in the pathway lipid metabolism; sphingolipid metabolism. Serine palmitoyltransferase (SPT). The heterodimer formed with LCB1 constitutes the catalytic core. The protein is Long chain base biosynthesis protein 2b of Oryza sativa subsp. japonica (Rice).